The following is a 356-amino-acid chain: Ornithine cyclodeaminase (356 aa).

L-ornithine is bound by residues Arg53 and Lys77. Residues Thr92, Arg120, 147 to 148, Asp169, Thr209, 232 to 235, Lys239, and Ser300 each bind NAD(+); these read AQ and VGGD. Position 120 (Arg120) interacts with L-ornithine. Residue Asp235 coordinates L-ornithine. Asp235 (proton donor/acceptor) is an active-site residue. Val301 is an L-ornithine binding site.

It belongs to the ornithine cyclodeaminase/mu-crystallin family. NAD(+) serves as cofactor.

The enzyme catalyses L-ornithine = L-proline + NH4(+). Its pathway is amino-acid biosynthesis; L-proline biosynthesis; L-proline from L-ornithine: step 1/1. Is inhibited by L-proline and L-lysine. Is not activated by small concentrations of L-arginine, and is even inhibited by about 50% at 0.5 mM L-arginine. Its function is as follows. Catalyzes the conversion of L-ornithine into L-proline with release of ammonia. Is involved in the utilization of octopine, a catabolic pathway that proceeds through L-arginine and L-ornithine to L-proline. Octopine is a predominant opine in plant cells transformed with Ti plasmid pTiAch5. This Agrobacterium tumefaciens (strain Ach5) protein is Ornithine cyclodeaminase.